The sequence spans 310 residues: Homoserine kinase (310 aa).

Proline 91–cysteine 101 is an ATP binding site.

Belongs to the GHMP kinase family. Homoserine kinase subfamily.

It is found in the cytoplasm. It catalyses the reaction L-homoserine + ATP = O-phospho-L-homoserine + ADP + H(+). Its pathway is amino-acid biosynthesis; L-threonine biosynthesis; L-threonine from L-aspartate: step 4/5. Catalyzes the ATP-dependent phosphorylation of L-homoserine to L-homoserine phosphate. The sequence is that of Homoserine kinase from Shigella flexneri serotype 5b (strain 8401).